Reading from the N-terminus, the 956-residue chain is Bifunctional glutamine synthetase adenylyltransferase/adenylyl-removing enzyme (956 aa).

Residues 1-450 (MENMSEQALP…YFKETVGGQE (450 aa)) are adenylyl removase. Positions 456–956 (EQWTAQLWSL…IYEQVLNNGQ (501 aa)) are adenylyl transferase.

This sequence belongs to the GlnE family. Mg(2+) serves as cofactor.

The catalysed reaction is [glutamine synthetase]-O(4)-(5'-adenylyl)-L-tyrosine + phosphate = [glutamine synthetase]-L-tyrosine + ADP. It catalyses the reaction [glutamine synthetase]-L-tyrosine + ATP = [glutamine synthetase]-O(4)-(5'-adenylyl)-L-tyrosine + diphosphate. Functionally, involved in the regulation of glutamine synthetase GlnA, a key enzyme in the process to assimilate ammonia. When cellular nitrogen levels are high, the C-terminal adenylyl transferase (AT) inactivates GlnA by covalent transfer of an adenylyl group from ATP to specific tyrosine residue of GlnA, thus reducing its activity. Conversely, when nitrogen levels are low, the N-terminal adenylyl removase (AR) activates GlnA by removing the adenylyl group by phosphorolysis, increasing its activity. The regulatory region of GlnE binds the signal transduction protein PII (GlnB) which indicates the nitrogen status of the cell. The chain is Bifunctional glutamine synthetase adenylyltransferase/adenylyl-removing enzyme from Shewanella loihica (strain ATCC BAA-1088 / PV-4).